The chain runs to 653 residues: Fructose-1,6-bisphosphatase class 3 2 (653 aa).

It belongs to the FBPase class 3 family. Requires Mn(2+) as cofactor.

It catalyses the reaction beta-D-fructose 1,6-bisphosphate + H2O = beta-D-fructose 6-phosphate + phosphate. It functions in the pathway carbohydrate biosynthesis; gluconeogenesis. This is Fructose-1,6-bisphosphatase class 3 2 from Clostridium beijerinckii (strain ATCC 51743 / NCIMB 8052) (Clostridium acetobutylicum).